A 145-amino-acid polypeptide reads, in one-letter code: Deoxyuridine 5'-triphosphate nucleotidohydrolase (145 aa).

Substrate-binding positions include 63-65 (RSG), Gln-76, and 80-82 (TVD).

It belongs to the dUTPase family. Mg(2+) serves as cofactor.

It catalyses the reaction dUTP + H2O = dUMP + diphosphate + H(+). The protein operates within pyrimidine metabolism; dUMP biosynthesis; dUMP from dCTP (dUTP route): step 2/2. In terms of biological role, this enzyme is involved in nucleotide metabolism: it produces dUMP, the immediate precursor of thymidine nucleotides and it decreases the intracellular concentration of dUTP so that uracil cannot be incorporated into DNA. The protein is Deoxyuridine 5'-triphosphate nucleotidohydrolase of Chlamydia trachomatis serovar L2 (strain ATCC VR-902B / DSM 19102 / 434/Bu).